The sequence spans 309 residues: Elongation factor Ts (309 aa).

The involved in Mg(2+) ion dislocation from EF-Tu stretch occupies residues 98–101; the sequence is TDFV.

Belongs to the EF-Ts family.

The protein localises to the cytoplasm. Its function is as follows. Associates with the EF-Tu.GDP complex and induces the exchange of GDP to GTP. It remains bound to the aminoacyl-tRNA.EF-Tu.GTP complex up to the GTP hydrolysis stage on the ribosome. This chain is Elongation factor Ts, found in Orientia tsutsugamushi (strain Boryong) (Rickettsia tsutsugamushi).